Consider the following 301-residue polypeptide: GTPase Era (301 aa).

The region spanning 7-175 (YCGFIAIVGR…ASIVRKHLPE (169 aa)) is the Era-type G domain. The segment at 15–22 (GRPNVGKS) is G1. A GTP-binding site is contributed by 15–22 (GRPNVGKS). The tract at residues 41–45 (QTTRH) is G2. Residues 62–65 (DTPG) are G3. GTP is bound by residues 62–66 (DTPGL) and 124–127 (NKVD). A G4 region spans residues 124–127 (NKVD). The G5 stretch occupies residues 154–156 (ISA). Residues 206–283 (LGAELPYSVT…HLELWVKVKS (78 aa)) enclose the KH type-2 domain.

The protein belongs to the TRAFAC class TrmE-Era-EngA-EngB-Septin-like GTPase superfamily. Era GTPase family. As to quaternary structure, monomer.

Its subcellular location is the cytoplasm. It is found in the cell inner membrane. An essential GTPase that binds both GDP and GTP, with rapid nucleotide exchange. Plays a role in 16S rRNA processing and 30S ribosomal subunit biogenesis and possibly also in cell cycle regulation and energy metabolism. The chain is GTPase Era from Salmonella arizonae (strain ATCC BAA-731 / CDC346-86 / RSK2980).